The primary structure comprises 223 residues: uncharacterized protein (223 aa).

Residues 1–11 are compositionally biased toward basic residues; that stretch reads MLWVQRKRRRK. The segment at 1-37 is disordered; it reads MLWVQRKRRRKETSECPSDKDKSPESHKAKNESWIKS. Residues 12 to 37 show a composition bias toward basic and acidic residues; it reads ETSECPSDKDKSPESHKAKNESWIKS. Phosphoserine is present on Ser43. 2 disordered regions span residues 49 to 73 and 196 to 223; these read LDNN…SSTV and THTF…NRRH. A compositionally biased stretch (polar residues) spans 51 to 61; the sequence is NNASASGNATQ. A compositionally biased stretch (low complexity) spans 62 to 73; the sequence is TESGSEEVSSTV. A compositionally biased stretch (basic residues) spans 202–223; sequence HSHHSHHGHPSHQSHSLPNRRH.

This is an uncharacterized protein from Homo sapiens (Human).